The sequence spans 188 residues: MSDRVLEINALAKELKANLKQFPNFPKEGILFEDFLPIFTKPDLFNKLVKAFKLHVGEQKIDYVIGLESRGFLFGPTLALALNAGFVPVRKPGKLPGPTFKVEFQKEYGSDEFEIQQDVIPKGAKVLIVDDILATGGSAFGAGELAKKTGAEIVEYLFVMELDFLKGRDKLDAPVYTLFGGQEEKFTE.

Residue 134 to 138 (ATGGS) participates in AMP binding.

It belongs to the purine/pyrimidine phosphoribosyltransferase family. In terms of assembly, homodimer. Requires Mg(2+) as cofactor.

It localises to the cytoplasm. It is found in the nucleus. The enzyme catalyses AMP + diphosphate = 5-phospho-alpha-D-ribose 1-diphosphate + adenine. The protein operates within purine metabolism; AMP biosynthesis via salvage pathway; AMP from adenine: step 1/1. Its function is as follows. Catalyzes a salvage reaction resulting in the formation of AMP, that is energically less costly than de novo synthesis. The protein is Adenine phosphoribosyltransferase (APT1) of Candida albicans (strain SC5314 / ATCC MYA-2876) (Yeast).